We begin with the raw amino-acid sequence, 2297 residues long: Serine/threonine-protein kinase WNK2 (2297 aa).

Residues 1 to 10 (MDGDGGRRDV) are compositionally biased toward basic and acidic residues. Disordered regions lie at residues 1–75 (MDGD…QRRV) and 89–183 (ARGR…EDDL). R19 and R30 each carry omega-N-methylarginine. The residue at position 45 (S45) is a Phosphoserine. The span at 92–120 (RPAAPAPAALVAQPGAPGAPADAGPEPVG) shows a compositional bias: low complexity. The span at 142 to 172 (GPREEAAATVRKEDEGAAEAKPEPGRTRRDE) shows a compositional bias: basic and acidic residues. The segment covering 173–182 (PEEEEDDEDD) has biased composition (acidic residues). A Protein kinase domain is found at 195-453 (LKFDIELGRG…IKDLLSHAFF (259 aa)). ATP contacts are provided by residues S205, 275-278 (TELM), and K325. The active-site Proton acceptor is the D342. Phosphoserine; by autocatalysis is present on residues S352 and S356. A Phosphoserine modification is found at S560. Disordered regions lie at residues 579-630 (AQAG…DSQS), 699-751 (FPDP…PVVP), 917-1022 (PQMA…PGSQ), 1117-1185 (PVQE…ERAS), 1262-1297 (SEDT…SQAN), 1323-1345 (APEA…ASQG), 1374-1480 (SAQS…HEAP), and 1492-1586 (PCTP…DSTI). A compositionally biased stretch (polar residues) spans 604–625 (PTSATSLASDSTFDSGQGSTVY). 2 stretches are compositionally biased toward pro residues: residues 709–740 (VLPP…PTPL) and 939–1007 (PPQP…PLQP). Phosphoserine is present on S1150. The span at 1167–1178 (ARKHHRRSTRAR) shows a compositional bias: basic residues. The residue at position 1262 (S1262) is a Phosphoserine. The span at 1392-1406 (SKEQPSFLASQQLLS) shows a compositional bias: polar residues. Pro residues predominate over residues 1411-1426 (SNPPGAPPAPLAPSSP). 2 stretches are compositionally biased toward polar residues: residues 1439–1453 (ATST…TASQ) and 1461–1473 (QGLT…SQPL). Over residues 1510–1520 (EPLPPPAPEPS) the composition is skewed to pro residues. Residues 1526–1544 (PQPALGQPAPLLPAAVGAV) show a composition bias toward low complexity. Residues 1552–1565 (PSPPLGPTVPPQPP) show a composition bias toward pro residues. Residue S1588 is modified to Phosphoserine. Basic and acidic residues predominate over residues 1621 to 1631 (TLEPLRGDQPR). A disordered region spans residues 1621–1865 (TLEPLRGDQP…PVQKQASLPV (245 aa)). Over residues 1675 to 1688 (QGTSSSMTAESSPR) the composition is skewed to polar residues. S1685 carries the phosphoserine modification. A compositionally biased stretch (basic and acidic residues) spans 1721–1731 (ARVEPTDRDGG). S1736, S1817, S1818, S1862, and S1889 each carry phosphoserine. Disordered stretches follow at residues 1970–1990 (NVGF…SKSK) and 2011–2031 (TGHL…QASV). Positions 1981-1990 (GRRRKTSKSK) are enriched in basic residues. At S2067 the chain carries Phosphoserine. Disordered regions lie at residues 2123–2142 (SRSS…QPAL) and 2269–2297 (CCGH…PVRS). Over residues 2272–2289 (HSTQPRGGQRVGSKTASF) the composition is skewed to polar residues.

Belongs to the protein kinase superfamily. Ser/Thr protein kinase family. WNK subfamily. As to quaternary structure, forms a complex with the phosphorylated form of STK39. Mg(2+) serves as cofactor. In terms of processing, autophosphorylated. Autophosphorylation at Ser-352 and Ser-356 promotes its activity. Expressed in various cancer cell lines (at protein level). Predominantly expressed in heart, brain, skeletal muscle and colon.

The protein resides in the cytoplasm. It is found in the cell membrane. The catalysed reaction is L-seryl-[protein] + ATP = O-phospho-L-seryl-[protein] + ADP + H(+). The enzyme catalyses L-threonyl-[protein] + ATP = O-phospho-L-threonyl-[protein] + ADP + H(+). With respect to regulation, activation requires autophosphorylation of Ser-356 and, to a lower extent, Ser-352. Its function is as follows. Serine/threonine-protein kinase component of the WNK2-SPAK/OSR1 kinase cascade, which plays an important role in the regulation of electrolyte homeostasis, cell signaling, survival, and proliferation. The WNK2-SPAK/OSR1 kinase cascade is composed of WNK2, which mediates phosphorylation and activation of downstream kinases OXSR1/OSR1 and STK39/SPAK. Following activation, OXSR1/OSR1 and STK39/SPAK catalyze phosphorylation of ion cotransporters, regulating their activity. Acts as an activator and inhibitor of sodium-coupled chloride cotransporters and potassium-coupled chloride cotransporters respectively. Activates SLC12A2, SCNN1A, SCNN1B, SCNN1D and SGK1 and inhibits SLC12A5. Negatively regulates the EGF-induced activation of the ERK/MAPK-pathway and the downstream cell cycle progression. Affects MAPK3/MAPK1 activity by modulating the activity of MAP2K1 and this modulation depends on phosphorylation of MAP2K1 by PAK1. WNK2 acts by interfering with the activity of PAK1 by controlling the balance of the activity of upstream regulators of PAK1 activity, RHOA and RAC1, which display reciprocal activity. The protein is Serine/threonine-protein kinase WNK2 of Homo sapiens (Human).